A 167-amino-acid chain; its full sequence is Minor fimbrial protein PrsF (167 aa).

Positions 1–18 (MIRLSLFISLLLTSVAVL) are cleaved as a signal peptide.

It is found in the secreted. It localises to the fimbrium. Its function is as follows. Fimbriae (also called pili), polar filaments radiating from the surface of the bacterium to a length of 0.5-1.5 micrometers and numbering 100-300 per cell, enable bacteria to colonize the epithelium of specific host organs. The polypeptide is Minor fimbrial protein PrsF (prsF) (Escherichia coli).